Reading from the N-terminus, the 396-residue chain is Phosphoglycerate kinase (396 aa).

Substrate-binding positions include 23–25 (DFN), Arg-38, 61–64 (HMGK), Arg-122, and Arg-155. ATP-binding positions include Lys-206, Gly-296, Glu-327, and 353–356 (GGDS).

It belongs to the phosphoglycerate kinase family. As to quaternary structure, monomer.

Its subcellular location is the cytoplasm. It catalyses the reaction (2R)-3-phosphoglycerate + ATP = (2R)-3-phospho-glyceroyl phosphate + ADP. Its pathway is carbohydrate degradation; glycolysis; pyruvate from D-glyceraldehyde 3-phosphate: step 2/5. This is Phosphoglycerate kinase from Clostridium botulinum (strain Alaska E43 / Type E3).